Reading from the N-terminus, the 487-residue chain is Virulence sensor histidine kinase PhoQ (487 aa).

Over 1-16 (MNKFARHFLPLSLRVR) the chain is Cytoplasmic. Residues 17-37 (FLLATAGVVLVLSLAYGIVAL) traverse the membrane as a helical segment. Residues 38 to 193 (VGYSVSFDKT…ELKRSYMVWS (156 aa)) lie on the Periplasmic side of the membrane. Positions 151 and 152 each coordinate a divalent metal cation. The helical transmembrane segment at 194-214 (WFVYVLAANLLLVIPLLWIAA) threads the bilayer. The region spanning 215 to 266 (WWSLRPIEALAREVRELEDHHREMLNPETTRELTSLVRNLNQLLKSERERYN) is the HAMP domain. The Cytoplasmic segment spans residues 215 to 487 (WWSLRPIEAL…GRQHPTQKEE (273 aa)). Positions 274–481 (DLTHSLKTPL…RMEVVFGRQH (208 aa)) constitute a Histidine kinase domain. Histidine 277 is subject to Phosphohistidine; by autocatalysis. Position 386 (asparagine 386) interacts with Mg(2+). ATP-binding positions include 386–394 (NVLDNACKY), 416–421 (DDGPGI), and 435–447 (RADT…GVGL). Glutamine 443 is a binding site for Mg(2+).

As to quaternary structure, homodimer.

Its subcellular location is the cell inner membrane. It catalyses the reaction ATP + protein L-histidine = ADP + protein N-phospho-L-histidine.. Its function is as follows. Member of the two-component regulatory system PhoP/PhoQ which regulates the expression of genes involved in virulence and resistance to host defense antimicrobial peptides. In low periplasmic Mg(2+), PhoQ functions as a membrane-associated protein kinase that undergoes autophosphorylation and subsequently transfers the phosphate to PhoP, which results in the expression of PhoP-activated genes (PAG) and repression of PhoP-repressed genes (PRG). In high periplasmic Mg(2+), acts as a protein phosphatase that dephosphorylates phospho-PhoP, which results in the repression of PAG and may lead to expression of some PRG. The polypeptide is Virulence sensor histidine kinase PhoQ (phoQ) (Salmonella paratyphi A (strain ATCC 9150 / SARB42)).